The following is a 912-amino-acid chain: Transferrin-binding protein A (912 aa).

The signal sequence occupies residues 1 to 23; the sequence is MTKKPYFRLSIISCLLISCYVKA. The short motif at 50-57 is the TonB box element; the sequence is ETISVTAE. The TBDR plug domain maps to 63-188; it reads KDNEVTGLGK…LAGSVTFQSK (126 aa). Residues 199-912 form the TBDR beta-barrel domain; the sequence is SWGIQTKNAY…NYTLTLEMKF (714 aa). A TonB C-terminal box motif is present at residues 895-912; that stretch reads TRYAASGRNYTLTLEMKF.

This sequence belongs to the TonB-dependent receptor family.

It is found in the cell outer membrane. Its function is as follows. Haemophilus acquires iron by extracting it from serum transferrin (TF) in its human host. Acts as a transferrin receptor and is required for transferrin utilization. This is Transferrin-binding protein A from Haemophilus influenzae (strain ATCC 51907 / DSM 11121 / KW20 / Rd).